Reading from the N-terminus, the 151-residue chain is Large ribosomal subunit protein bL9 (151 aa).

This sequence belongs to the bacterial ribosomal protein bL9 family.

Binds to the 23S rRNA. The chain is Large ribosomal subunit protein bL9 from Lacticaseibacillus casei (strain BL23) (Lactobacillus casei).